Reading from the N-terminus, the 513-residue chain is ATP synthase subunit alpha (513 aa).

169 to 176 (GDRQTGKT) is an ATP binding site.

The protein belongs to the ATPase alpha/beta chains family. As to quaternary structure, F-type ATPases have 2 components, CF(1) - the catalytic core - and CF(0) - the membrane proton channel. CF(1) has five subunits: alpha(3), beta(3), gamma(1), delta(1), epsilon(1). CF(0) has three main subunits: a(1), b(2) and c(9-12). The alpha and beta chains form an alternating ring which encloses part of the gamma chain. CF(1) is attached to CF(0) by a central stalk formed by the gamma and epsilon chains, while a peripheral stalk is formed by the delta and b chains.

It localises to the cell inner membrane. The catalysed reaction is ATP + H2O + 4 H(+)(in) = ADP + phosphate + 5 H(+)(out). Its function is as follows. Produces ATP from ADP in the presence of a proton gradient across the membrane. The alpha chain is a regulatory subunit. This is ATP synthase subunit alpha from Thiobacillus denitrificans (strain ATCC 25259 / T1).